A 1073-amino-acid polypeptide reads, in one-letter code: Probable lipase MIL1 (1073 aa).

Disordered stretches follow at residues 1 to 151 (MSDS…AVSS) and 163 to 190 (LTSKVRNSEQASETSPTVPPGKNCKSVN). Basic and acidic residues-rich tracts occupy residues 54–81 (QAKEEVFKRREEDGTRTEDALHEGEAGK) and 101–121 (GIDRADKPILLDPFKSVHDTD). Positions 143–147 (WQEMP) match the APM2-interacting WQEMP motif motif. 3 N-linked (GlcNAc...) asparagine glycosylation sites follow: N190, N229, and N236. The interval 230–267 (SSQTSVNLTSSPSTTSLNNEKNNDDDDDDSYDEYEDDV) is disordered. Residues 233 to 249 (TSVNLTSSPSTTSLNNE) are compositionally biased toward low complexity. The segment covering 252 to 267 (NDDDDDDSYDEYEDDV) has biased composition (acidic residues). A glycan (N-linked (GlcNAc...) asparagine) is linked at N280. The chain crosses the membrane as a helical span at residues 292-312 (FAYVGAINILANQMCTNLATL). Residues 385 to 448 (NPWENDRDHE…SDVPGKVLDP (64 aa)) form a disordered region. The span at 404–427 (RMSPNEQNGSVQASTPDPEQSATP) shows a compositional bias: polar residues. Residue N411 is glycosylated (N-linked (GlcNAc...) asparagine). S435 carries the post-translational modification Phosphoserine. Residues 457-477 (LNIDVAWTIICDLFLICLQSS) traverse the membrane as a helical segment. N-linked (GlcNAc...) asparagine glycosylation occurs at N495. A run of 2 helical transmembrane segments spans residues 553-573 (LVLGLSGGLLAPVIGGGIAAG) and 577-597 (IGITGATSFLTGVGGTTVVAV). N-linked (GlcNAc...) asparagine glycosylation occurs at N726. A helical transmembrane segment spans residues 818-838 (WFLAYLFRAAAGGFSAVMGIS). N850 carries N-linked (GlcNAc...) asparagine glycosylation. Disordered regions lie at residues 942-968 (GRDMQDLPENDVNNNENENPDEHEGIA) and 1010-1073 (KEVE…PDDI). Pro residues predominate over residues 1027-1037 (PSTPKINPPQS). The residue at position 1037 (S1037) is a Phosphoserine.

It belongs to the TMCO4 family. In terms of assembly, interacts with RPP0. Interacts with APM2.

It localises to the golgi apparatus membrane. The protein resides in the early endosome membrane. It is found in the cytoplasmic vesicle. The protein localises to the clathrin-coated vesicle membrane. In terms of biological role, probable lipase that recruits the AP-1-related (AP-1R) complex to membranes via interaction with APM2. The AP-1R complex is an adapter protein complex that mediates of cargo protein SNC1 sorting in clathrin-coated vesicles. This is Probable lipase MIL1 from Saccharomyces cerevisiae (strain ATCC 204508 / S288c) (Baker's yeast).